The sequence spans 622 residues: Chaperone protein HscA homolog (622 aa).

The protein belongs to the heat shock protein 70 family.

Functionally, chaperone involved in the maturation of iron-sulfur cluster-containing proteins. Has a low intrinsic ATPase activity which is markedly stimulated by HscB. This chain is Chaperone protein HscA homolog, found in Aromatoleum aromaticum (strain DSM 19018 / LMG 30748 / EbN1) (Azoarcus sp. (strain EbN1)).